A 437-amino-acid polypeptide reads, in one-letter code: Chaperone SurA (437 aa).

An N-terminal signal peptide occupies residues 1–22; the sequence is MKNWKFPLISTLLLLLTINVHA. 2 PpiC domains span residues 173-274 and 283-383; these read TVQY…KIDD and VTEV…EVLE.

It localises to the periplasm. It carries out the reaction [protein]-peptidylproline (omega=180) = [protein]-peptidylproline (omega=0). Functionally, chaperone involved in the correct folding and assembly of outer membrane proteins. Recognizes specific patterns of aromatic residues and the orientation of their side chains, which are found more frequently in integral outer membrane proteins. May act in both early periplasmic and late outer membrane-associated steps of protein maturation. The chain is Chaperone SurA from Aliivibrio fischeri (strain ATCC 700601 / ES114) (Vibrio fischeri).